Here is a 239-residue protein sequence, read N- to C-terminus: Ribonuclease PH (239 aa).

Residues arginine 87 and 125-127 (GTR) contribute to the phosphate site.

This sequence belongs to the RNase PH family. In terms of assembly, homohexameric ring arranged as a trimer of dimers.

The catalysed reaction is tRNA(n+1) + phosphate = tRNA(n) + a ribonucleoside 5'-diphosphate. In terms of biological role, phosphorolytic 3'-5' exoribonuclease that plays an important role in tRNA 3'-end maturation. Removes nucleotide residues following the 3'-CCA terminus of tRNAs; can also add nucleotides to the ends of RNA molecules by using nucleoside diphosphates as substrates, but this may not be physiologically important. Probably plays a role in initiation of 16S rRNA degradation (leading to ribosome degradation) during starvation. The protein is Ribonuclease PH of Pseudomonas paraeruginosa (strain DSM 24068 / PA7) (Pseudomonas aeruginosa (strain PA7)).